The chain runs to 649 residues: Centrosomal protein of 63 kDa-A (649 aa).

Coiled coils occupy residues 19–185 (DSCE…YQHQ) and 222–556 (EEEL…DAAS). A Phosphoserine; by atm and atr modification is found at serine 560. Residues 612–645 (FLQEEEQRSHELLQRLNAHIEELKQESQRTVEHF) adopt a coiled-coil conformation.

Belongs to the CEP63 family. Phosphorylation at Ser-560 by atm and atr promotes its delocalization from the centrosome and impairs its ability to promote centrosome dependent spindle assembly.

The protein resides in the cytoplasm. It is found in the cytoskeleton. The protein localises to the microtubule organizing center. It localises to the centrosome. Its subcellular location is the centriole. Required for normal spindle assembly. Plays a key role in mother-centriole-dependent centriole duplication. Plays a role in DNA damage response. Following DNA damage, such as double-strand breaks (DSBs), is removed from centrosomes; this leads to the inactivation of spindle assembly and delay in mitotic progression. The protein is Centrosomal protein of 63 kDa-A (cep63-a) of Xenopus laevis (African clawed frog).